Here is a 526-residue protein sequence, read N- to C-terminus: ATP-dependent RNA helicase dbp8 (526 aa).

Residues 1 to 77 (MTSPVPSEPV…DAKPAAPAGQ (77 aa)) are disordered. A compositionally biased stretch (polar residues) spans 17–31 (SSSGSEVEPSKTSTR). The Q motif signature appears at 96-124 (SSFAALNVAPWLVGSLTTMAVRKPTAIQK). The 180-residue stretch at 127–306 (IPEILKGRDC…NMPRSANKPP (180 aa)) folds into the Helicase ATP-binding domain. 140 to 147 (SRTGSGKT) serves as a coordination point for ATP. A DEAD box motif is present at residues 249–252 (DEAD). The region spanning 338 to 485 (AFLHVLLSTE…EWSEEGVSIE (148 aa)) is the Helicase C-terminal domain.

This sequence belongs to the DEAD box helicase family. DDX49/DBP8 subfamily.

The protein localises to the nucleus. The protein resides in the nucleolus. The enzyme catalyses ATP + H2O = ADP + phosphate + H(+). In terms of biological role, ATP-binding RNA helicase involved in 40S ribosomal subunit biogenesis and is required for the normal formation of 18S rRNAs through pre-rRNA processing at A0, A1 and A2 sites. Required for vegetative growth. The sequence is that of ATP-dependent RNA helicase dbp8 (dbp8) from Aspergillus fumigatus (strain ATCC MYA-4609 / CBS 101355 / FGSC A1100 / Af293) (Neosartorya fumigata).